The chain runs to 289 residues: Acetyl-coenzyme A carboxylase carboxyl transferase subunit beta (289 aa).

Residues 28–289 form the CoA carboxyltransferase N-terminal domain; that stretch reads VMTKCPKCKK…QGEGMAVWQN (262 aa). Zn(2+) contacts are provided by C32, C35, C51, and C54. Residues 32–54 form a C4-type zinc finger; that stretch reads CPKCKKIMYTKELLKNLKVCVNC.

This sequence belongs to the AccD/PCCB family. In terms of assembly, acetyl-CoA carboxylase is a heterohexamer composed of biotin carboxyl carrier protein (AccB), biotin carboxylase (AccC) and two subunits each of ACCase subunit alpha (AccA) and ACCase subunit beta (AccD). Zn(2+) serves as cofactor.

The protein localises to the cytoplasm. The enzyme catalyses N(6)-carboxybiotinyl-L-lysyl-[protein] + acetyl-CoA = N(6)-biotinyl-L-lysyl-[protein] + malonyl-CoA. It participates in lipid metabolism; malonyl-CoA biosynthesis; malonyl-CoA from acetyl-CoA: step 1/1. Component of the acetyl coenzyme A carboxylase (ACC) complex. Biotin carboxylase (BC) catalyzes the carboxylation of biotin on its carrier protein (BCCP) and then the CO(2) group is transferred by the transcarboxylase to acetyl-CoA to form malonyl-CoA. The sequence is that of Acetyl-coenzyme A carboxylase carboxyl transferase subunit beta from Bacillus cytotoxicus (strain DSM 22905 / CIP 110041 / 391-98 / NVH 391-98).